The following is a 293-amino-acid chain: Acetylglutamate kinase (293 aa).

Residues 68-69 (GG), R90, and N189 each bind substrate.

Belongs to the acetylglutamate kinase family. ArgB subfamily.

The protein resides in the cytoplasm. The catalysed reaction is N-acetyl-L-glutamate + ATP = N-acetyl-L-glutamyl 5-phosphate + ADP. Its pathway is amino-acid biosynthesis; L-arginine biosynthesis; N(2)-acetyl-L-ornithine from L-glutamate: step 2/4. Functionally, catalyzes the ATP-dependent phosphorylation of N-acetyl-L-glutamate. The chain is Acetylglutamate kinase from Caldicellulosiruptor bescii (strain ATCC BAA-1888 / DSM 6725 / KCTC 15123 / Z-1320) (Anaerocellum thermophilum).